Here is a 290-residue protein sequence, read N- to C-terminus: Arylamine N-acetyltransferase 1 (290 aa).

N-acetylmethionine is present on Met1. Cys68 acts as the Acyl-thioester intermediate in catalysis. A CoA-binding site is contributed by Ser103. 106-107 (VH) is a substrate binding site. Catalysis depends on residues His107 and Asp122. Tyr208 is a CoA binding site.

The protein belongs to the arylamine N-acetyltransferase family.

The protein resides in the cytoplasm. The catalysed reaction is an arylamine + acetyl-CoA = an N-acetylarylamine + CoA. Participates in the detoxification of a plethora of hydrazine and arylamine drugs. Acetylates both arylamines and arylalkylamines. This chain is Arylamine N-acetyltransferase 1 (Nat1), found in Rattus norvegicus (Rat).